We begin with the raw amino-acid sequence, 120 residues long: NAD(P)H-quinone oxidoreductase subunit 3, chloroplastic (120 aa).

3 helical membrane-spanning segments follow: residues 9-29 (IFWA…LFSG), 64-84 (MFAL…PWAM), and 88-108 (ILGV…IVGL).

Belongs to the complex I subunit 3 family. In terms of assembly, NDH is composed of at least 16 different subunits, 5 of which are encoded in the nucleus.

The protein resides in the plastid. Its subcellular location is the chloroplast thylakoid membrane. The catalysed reaction is a plastoquinone + NADH + (n+1) H(+)(in) = a plastoquinol + NAD(+) + n H(+)(out). It carries out the reaction a plastoquinone + NADPH + (n+1) H(+)(in) = a plastoquinol + NADP(+) + n H(+)(out). Functionally, NDH shuttles electrons from NAD(P)H:plastoquinone, via FMN and iron-sulfur (Fe-S) centers, to quinones in the photosynthetic chain and possibly in a chloroplast respiratory chain. The immediate electron acceptor for the enzyme in this species is believed to be plastoquinone. Couples the redox reaction to proton translocation, and thus conserves the redox energy in a proton gradient. The polypeptide is NAD(P)H-quinone oxidoreductase subunit 3, chloroplastic (Spinacia oleracea (Spinach)).